Reading from the N-terminus, the 504-residue chain is Maturase K (504 aa).

The protein belongs to the intron maturase 2 family. MatK subfamily.

It localises to the plastid. Its subcellular location is the chloroplast. In terms of biological role, usually encoded in the trnK tRNA gene intron. Probably assists in splicing its own and other chloroplast group II introns. This chain is Maturase K, found in Quercus cerris (Turkey oak).